A 343-amino-acid polypeptide reads, in one-letter code: Phosphoribosylformylglycinamidine cyclo-ligase (343 aa).

This sequence belongs to the AIR synthase family.

Its subcellular location is the cytoplasm. It carries out the reaction 2-formamido-N(1)-(5-O-phospho-beta-D-ribosyl)acetamidine + ATP = 5-amino-1-(5-phospho-beta-D-ribosyl)imidazole + ADP + phosphate + H(+). Its pathway is purine metabolism; IMP biosynthesis via de novo pathway; 5-amino-1-(5-phospho-D-ribosyl)imidazole from N(2)-formyl-N(1)-(5-phospho-D-ribosyl)glycinamide: step 2/2. The protein is Phosphoribosylformylglycinamidine cyclo-ligase of Carboxydothermus hydrogenoformans (strain ATCC BAA-161 / DSM 6008 / Z-2901).